Here is a 281-residue protein sequence, read N- to C-terminus: Putative E3 ubiquitin-protein ligase SINA-like 6 (281 aa).

The segment at 1 to 26 is disordered; it reads MVGVLLSERNGSQKRHCSSISSDDGR. The RING-type zinc-finger motif lies at 45-81; the sequence is CPICYQALKIPVFQCGNGHLACSSCCPKLRNKCPACA. Residues 95–280 are SBD; the sequence is VLESVLVPCR…MMLCINELKQ (186 aa). The segment at 98–156 adopts an SIAH-type zinc-finger fold; that stretch reads SVLVPCRYADLGCTKTIYYGRESTHEKICNFSPCSCPVQGCNYTGSYKDLYEHYDLTHS. The Zn(2+) site is built by cysteine 103, cysteine 110, histidine 122, cysteine 126, cysteine 133, cysteine 138, histidine 150, and histidine 155.

It belongs to the SINA (Seven in absentia) family.

The catalysed reaction is S-ubiquitinyl-[E2 ubiquitin-conjugating enzyme]-L-cysteine + [acceptor protein]-L-lysine = [E2 ubiquitin-conjugating enzyme]-L-cysteine + N(6)-ubiquitinyl-[acceptor protein]-L-lysine.. It functions in the pathway protein modification; protein ubiquitination. E3 ubiquitin-protein ligase that mediates ubiquitination and subsequent proteasomal degradation of target proteins. E3 ubiquitin ligases accept ubiquitin from an E2 ubiquitin-conjugating enzyme in the form of a thioester and then directly transfers the ubiquitin to targeted substrates. It probably triggers the ubiquitin-mediated degradation of different substrates. The polypeptide is Putative E3 ubiquitin-protein ligase SINA-like 6 (Arabidopsis thaliana (Mouse-ear cress)).